An 88-amino-acid chain; its full sequence is MYKGIFLCVLFAVICANSLAKPSSDADEDNDEVERYVRGWASKIGQTLGKIAKVGLQGLMQPKREAMLRSAEAQGMIGTLTSKRIKQG.

Residues 1-20 form the signal peptide; that stretch reads MYKGIFLCVLFAVICANSLA. A Pyrrolidone carboxylic acid modification is found at Gln-74. Position 87 is a glutamine amide (Gln-87).

Belongs to the gastrin/cholecystokinin family. Expressed by the skin glands.

The protein localises to the secreted. The protein is Prolevitide of Xenopus laevis (African clawed frog).